Here is a 155-residue protein sequence, read N- to C-terminus: Small ribosomal subunit protein uS7cz/uS7cy (155 aa).

The protein belongs to the universal ribosomal protein uS7 family. In terms of assembly, part of the 30S ribosomal subunit.

It is found in the plastid. Its subcellular location is the chloroplast. Functionally, one of the primary rRNA binding proteins, it binds directly to 16S rRNA where it nucleates assembly of the head domain of the 30S subunit. This is Small ribosomal subunit protein uS7cz/uS7cy (rps7-A) from Oenothera argillicola (Appalachian evening primrose).